The following is a 202-amino-acid chain: Prohormone-4 (202 aa).

An N-terminal signal peptide occupies residues Met-1–Ala-28. An LDL-receptor class A domain is found at Ala-46–Thr-86. 3 disulfides stabilise this stretch: Cys-47/Cys-61, Cys-55/Cys-74, and Cys-68/Cys-85.

Its subcellular location is the secreted. This chain is Prohormone-4, found in Apis mellifera (Honeybee).